A 100-amino-acid chain; its full sequence is Large ribosomal subunit protein bL21 (100 aa).

It belongs to the bacterial ribosomal protein bL21 family. In terms of assembly, part of the 50S ribosomal subunit. Contacts protein L20.

This protein binds to 23S rRNA in the presence of protein L20. This is Large ribosomal subunit protein bL21 from Wolbachia pipientis wMel.